The chain runs to 127 residues: Small ribosomal subunit protein uS13 (127 aa).

The disordered stretch occupies residues 95–127 (GLPLRGQRTKTNARTRRGKKGAAIGGKKKATKK).

The protein belongs to the universal ribosomal protein uS13 family. As to quaternary structure, part of the 30S ribosomal subunit. Forms a loose heterodimer with protein S19. Forms two bridges to the 50S subunit in the 70S ribosome.

Its function is as follows. Located at the top of the head of the 30S subunit, it contacts several helices of the 16S rRNA. In the 70S ribosome it contacts the 23S rRNA (bridge B1a) and protein L5 of the 50S subunit (bridge B1b), connecting the 2 subunits; these bridges are implicated in subunit movement. Contacts the tRNAs in the A and P-sites. In Herpetosiphon aurantiacus (strain ATCC 23779 / DSM 785 / 114-95), this protein is Small ribosomal subunit protein uS13.